The following is a 211-amino-acid chain: Calcipressin-like protein (211 aa).

Phosphoserine occurs at positions 113 and 117. At Thr-182 the chain carries Phosphothreonine.

This sequence belongs to the RCAN family.

In terms of biological role, inhibits calcineurin-dependent transcriptional responses by binding to the catalytic domain of calcineurin. The protein is Calcipressin-like protein (RCN1) of Saccharomyces cerevisiae (strain ATCC 204508 / S288c) (Baker's yeast).